Reading from the N-terminus, the 87-residue chain is Small ribosomal subunit protein bS20 (87 aa).

Belongs to the bacterial ribosomal protein bS20 family.

Binds directly to 16S ribosomal RNA. The chain is Small ribosomal subunit protein bS20 from Corynebacterium jeikeium (strain K411).